The primary structure comprises 272 residues: Hemin import ATP-binding protein HmuV (272 aa).

The region spanning 2–255 (LNAEHLHVAR…DLIERCYGFR (254 aa)) is the ABC transporter domain. 34–41 (GRNGAGKS) contributes to the ATP binding site.

It belongs to the ABC transporter superfamily. Heme (hemin) importer (TC 3.A.1.14.5) family. In terms of assembly, the complex is composed of two ATP-binding proteins (HmuV), two transmembrane proteins (HmuU) and a solute-binding protein (HmuT).

Its subcellular location is the cell inner membrane. Functionally, part of the ABC transporter complex HmuTUV involved in hemin import. Responsible for energy coupling to the transport system. This chain is Hemin import ATP-binding protein HmuV, found in Burkholderia thailandensis (strain ATCC 700388 / DSM 13276 / CCUG 48851 / CIP 106301 / E264).